The chain runs to 144 residues: DNA-directed RNA polymerases II and V subunit 6B (144 aa).

Over residues 1-32 (MADDDYNEVDDLGYEDEPAEPEIEEGVEEDAD) the composition is skewed to acidic residues. Residues 1–62 (MADDDYNEVD…EPVQRPRKTS (62 aa)) are disordered. A compositionally biased stretch (basic and acidic residues) spans 46-56 (TEDKVETEPVQ).

The protein belongs to the archaeal Rpo6/eukaryotic RPB6 RNA polymerase subunit family. In terms of assembly, component of the RNA polymerase II and V complexes.

The protein resides in the nucleus. In terms of biological role, DNA-dependent RNA polymerase catalyzes the transcription of DNA into RNA using the four ribonucleoside triphosphates as substrates. Component of RNA polymerase II which synthesizes mRNA precursors and many functional non-coding RNAs. Pol II is the central component of the basal RNA polymerase II transcription machinery. It is composed of mobile elements that move relative to each other. Component of RNA polymerase V which mediates RNA-directed DNA methylation-dependent (RdDM) transcriptional gene silencing (TGS) of endogenous repeated sequences, including transposable elements. The chain is DNA-directed RNA polymerases II and V subunit 6B (NRPB6B) from Arabidopsis thaliana (Mouse-ear cress).